The following is a 153-amino-acid chain: MAQEGGAVEQFGQWLWSNPIEQDPDDEMVDAREEEGQILYLDQQAGLRYSYSQLTTLKPTPPGQSNSAPVYRNAQRFQTEYSSPTIVTRSQVSELSLSHTRPPIRQALSLLSSTPRASNQPWVATLIPSPSARPPPRPSGQRQLMGRNSRNQR.

Disordered stretches follow at residues 1 to 24 (MAQEGGAVEQFGQWLWSNPIEQDP) and 107 to 153 (ALSL…RNQR). Polar residues-rich tracts occupy residues 109-122 (SLLSSTPRASNQPW) and 140-153 (GQRQLMGRNSRNQR).

It belongs to the luteoviruses movement protein family.

The protein localises to the host nucleus envelope. Transports viral genome to neighboring plant cells directly through plasmosdesmata, without any budding. The movement protein allows efficient cell to cell propagation, by bypassing the host cell wall barrier. Acts as a suppressor of RNA-mediated gene silencing, also known as post-transcriptional gene silencing (PTGS), a mechanism of plant viral defense that limits the accumulation of viral RNAs. The sequence is that of Movement protein from Avena byzantina (Oat).